A 768-amino-acid polypeptide reads, in one-letter code: Multidomain esterase (768 aa).

Residues 1–40 (MKKHFVVGETIKRFLRIGTSLALSISTLSLLPSAPRLSSA) form the signal peptide. An acetylxylan esterase region spans residues 41–264 (AGTIKIMPLG…YWLEQIEGYL (224 aa)). The active-site Nucleophile; for acetylxylan esterase activity is the Ser-68. Residues Asp-240 and His-243 each act as for acetylxylan esterase activity in the active site. Low complexity predominate over residues 267-283 (SDGPQQTQPTQPSQGDS). The segment at 267-289 (SDGPQQTQPTQPSQGDSGPELIY) is disordered. Residues 285–352 (PELIYGDLDG…IIGKIKEFTV (68 aa)) enclose the Dockerin domain. Positions 353–768 (AEKTVTEKPV…ADTFASKWLY (416 aa)) are glucuronoyl esterase. Positions 563–568 (GVSRYG) match the GXSYXG catalytic site motif motif. The Nucleophile; for glucuronoyl esterase activity role is filled by Ser-565. Substrate is bound by residues Lys-569, Glu-633, and Trp-679.

This sequence in the N-terminal section; belongs to the carbohydrate esterase 3 (CE3) family. It in the C-terminal section; belongs to the carbohydrate esterase 15 (CE15) family.

The protein localises to the secreted. It catalyses the reaction Deacetylation of xylans and xylo-oligosaccharides.. It carries out the reaction a 4-O-methyl-alpha-D-glucuronosyl ester derivative + H2O = 4-O-methyl-alpha-D-glucuronate derivative + an alcohol + H(+). Its pathway is glycan degradation; xylan degradation. In terms of biological role, esterase involved in the degradation of plant cell wall polysaccharides. Catalyzes the deacetylation of chemically acetylated xylan and native, steam-extracted xylan. Seems to act in synergy with the xylanase XynD which produces xylo-oligosaccharides. Also catalyzes the deesterification of methyl esters of 4-O-methyl-D-glucuronic acid (MeGlcA) side residues in synthetic glucuronoxylan methyl ester, suggesting that it may be able to cleave ester linkages between MeGlcA carboxyl and more complex alcohols, including linkages between hemicellulose and lignin alcohols in plant cell walls. The chain is Multidomain esterase from Ruminococcus flavefaciens.